Reading from the N-terminus, the 586-residue chain is Putative Lon protease homolog (586 aa).

The Lon proteolytic domain maps to 346–543; sequence GERIGQINAL…TDALPLLLNL (198 aa). Active-site residues include S438 and K481.

This sequence belongs to the peptidase S16 family.

In Escherichia coli (strain K12), this protein is Putative Lon protease homolog (ycbZ).